The primary structure comprises 253 residues: A-type ATP synthase subunit B (253 aa).

The protein belongs to the ATPase alpha/beta chains family. Has multiple subunits with at least A(3), B(3), C, D, E, F, H, I and proteolipid K(x).

The protein localises to the cell membrane. In terms of biological role, component of the A-type ATP synthase that produces ATP from ADP in the presence of a proton gradient across the membrane. The B chain is a regulatory subunit. The chain is A-type ATP synthase subunit B from Methanothermococcus thermolithotrophicus (Methanococcus thermolithotrophicus).